Here is a 430-residue protein sequence, read N- to C-terminus: Adenylosuccinate synthetase (430 aa).

GTP contacts are provided by residues 12-18 (GDEGKGK) and 40-42 (GHT). The active-site Proton acceptor is the Asp13. 2 residues coordinate Mg(2+): Asp13 and Gly40. IMP contacts are provided by residues 13–16 (DEGK), 38–41 (NAGH), Thr128, Arg142, Gln223, Thr238, and Arg302. His41 acts as the Proton donor in catalysis. 298-304 (VNTGRKR) contributes to the substrate binding site. Residues Arg304, 330–332 (KLD), and 412–414 (GVG) contribute to the GTP site.

This sequence belongs to the adenylosuccinate synthetase family. In terms of assembly, homodimer. It depends on Mg(2+) as a cofactor.

Its subcellular location is the cytoplasm. It carries out the reaction IMP + L-aspartate + GTP = N(6)-(1,2-dicarboxyethyl)-AMP + GDP + phosphate + 2 H(+). Its pathway is purine metabolism; AMP biosynthesis via de novo pathway; AMP from IMP: step 1/2. In terms of biological role, plays an important role in the de novo pathway of purine nucleotide biosynthesis. Catalyzes the first committed step in the biosynthesis of AMP from IMP. This is Adenylosuccinate synthetase from Corynebacterium aurimucosum (strain ATCC 700975 / DSM 44827 / CIP 107346 / CN-1) (Corynebacterium nigricans).